A 715-amino-acid chain; its full sequence is MIYQGKAITVKALESGIVELKFDLKGESVNKFNRLTLNELRQAVDAIQADASVKGVIVSSGKDVFIVGADITEFVDNFKLPEAELVAGNLEANRIFNAFEDLEVPTVAAISGIALGGGLEMCLAADYRVMSTSAKIGLPEVKLGIYPGFGGTVRLPRLIGSDNAIEWIAAGKENRAEDALKVGAVDAVVAPELLMAGALDLVKRAISGELDYKAKRQPKLEKLKLNAIEQMMAFETAKGFVAGQAGPNYPAPVEAIKTIQKAANFGRDKALEVEAAGFAKLAKTSVAESLIGLFLNDQELKRKAKAHDEIAHDAKQAAVLGAGIMGGGIAYQSAVKGTPILMKDIREEAIQLGLNEASKLLGNRVEKGRLTPAKMAEALNAIRPTLSYGDFANVDIVVEAVVENPKVKQAVLAEVETQVKDDAILASNTSTISINLLAKALKRPENFVGMHFFNPVHMMPLVEVIRGEKSSEVAVATTVAYAKKMGKNPIVVNDCPGFLVNRVLFPYFGGFAKLVSAGVDFVRIDKVMEKFGWPMGPAYLMDVVGIDTGHHGRDVMAEGFPDRMKDERRSAVDALYEANRLGQKNGKGFYAYETDKRGKPKKVADASVLDVLKPIVFEQREVTDEDIINWMMIPLCLETVRCLEDGIVETAAEADMGLVYGIGFPPFRGGALRYIDSIGVAEFVALADQYADLGPLYHPTAKLREMAKNGQRFFN.

Residues 1–190 are enoyl-CoA hydratase/isomerase; that stretch reads MIYQGKAITV…KVGAVDAVVA (190 aa). Position 297 (D297) interacts with substrate. Residues 312-715 form a 3-hydroxyacyl-CoA dehydrogenase region; it reads HDAKQAAVLG…MAKNGQRFFN (404 aa). Residues M325, D344, 401–403, K408, and S430 each bind NAD(+); that span reads VVE. Catalysis depends on H451, which acts as the For 3-hydroxyacyl-CoA dehydrogenase activity. N454 is a binding site for NAD(+). Residues N501 and Y660 each contribute to the substrate site.

In the N-terminal section; belongs to the enoyl-CoA hydratase/isomerase family. It in the C-terminal section; belongs to the 3-hydroxyacyl-CoA dehydrogenase family. Heterotetramer of two alpha chains (FadB) and two beta chains (FadA).

It carries out the reaction a (3S)-3-hydroxyacyl-CoA + NAD(+) = a 3-oxoacyl-CoA + NADH + H(+). The enzyme catalyses a (3S)-3-hydroxyacyl-CoA = a (2E)-enoyl-CoA + H2O. It catalyses the reaction a 4-saturated-(3S)-3-hydroxyacyl-CoA = a (3E)-enoyl-CoA + H2O. The catalysed reaction is (3S)-3-hydroxybutanoyl-CoA = (3R)-3-hydroxybutanoyl-CoA. It carries out the reaction a (3Z)-enoyl-CoA = a 4-saturated (2E)-enoyl-CoA. The enzyme catalyses a (3E)-enoyl-CoA = a 4-saturated (2E)-enoyl-CoA. The protein operates within lipid metabolism; fatty acid beta-oxidation. In terms of biological role, involved in the aerobic and anaerobic degradation of long-chain fatty acids via beta-oxidation cycle. Catalyzes the formation of 3-oxoacyl-CoA from enoyl-CoA via L-3-hydroxyacyl-CoA. It can also use D-3-hydroxyacyl-CoA and cis-3-enoyl-CoA as substrate. The sequence is that of Fatty acid oxidation complex subunit alpha from Ectopseudomonas oleovorans (Pseudomonas oleovorans).